We begin with the raw amino-acid sequence, 460 residues long: Dynactin subunit 4 (460 aa).

A2 is subject to N-acetylalanine. Residues 152–172 (QQLAQKEKVERDRKKLARRRN) adopt a coiled-coil conformation. Residue S196 is modified to Phosphoserine. K215 is covalently cross-linked (Glycyl lysine isopeptide (Lys-Gly) (interchain with G-Cter in SUMO2)). At T407 the chain carries Phosphothreonine.

Belongs to the dynactin subunit 4 family. In terms of assembly, subunit of dynactin, a multiprotein complex part of a tripartite complex with dynein and a adapter, such as BICDL1, BICD2 or HOOK3. The dynactin complex is built around ACTR1A/ACTB filament and consists of an actin-related filament composed of a shoulder domain, a pointed end and a barbed end. Its length is defined by its flexible shoulder domain. The soulder is composed of 2 DCTN1 subunits, 4 DCTN2 and 2 DCTN3. The 4 DCNT2 (via N-terminus) bind the ACTR1A filament and act as molecular rulers to determine the length. The pointed end is important for binding dynein-dynactin cargo adapters. Consists of 4 subunits: ACTR10, DCNT4, DCTN5 and DCTN6. The barbed end is composed of a CAPZA1:CAPZB heterodimers, which binds ACTR1A/ACTB filament and dynactin and stabilizes dynactin. Interacts with ATP7B, but not ATP7A, in a copper-dependent manner. Interacts with ANK2; this interaction is required for localization at costameres. Interacts with N4BP2L1.

Its subcellular location is the cytoplasm. It is found in the cytoskeleton. The protein resides in the microtubule organizing center. The protein localises to the centrosome. It localises to the stress fiber. Its subcellular location is the cell cortex. It is found in the myofibril. The protein resides in the sarcomere. Its function is as follows. Part of the dynactin complex that activates the molecular motor dynein for ultra-processive transport along microtubules. The polypeptide is Dynactin subunit 4 (DCTN4) (Pongo abelii (Sumatran orangutan)).